Reading from the N-terminus, the 329-residue chain is Basic leucine zipper 61 (329 aa).

2 disordered regions span residues 1-22 (MAQLPPKIPTMTTPNWPDFSSQ) and 98-204 (DDVH…HDPK). Polar residues predominate over residues 10–22 (TMTTPNWPDFSSQ). Residues 119-133 (PTRSSSNTSTPSDHN) show a composition bias toward low complexity. Residues 139-154 (DNNKEAPPSDHDHHMD) show a composition bias toward basic and acidic residues. Residues 155–169 (NNVANQNNAAGNNYN) show a composition bias toward low complexity. The 53-residue stretch at 202–254 (DPKRVKRILANRQSAQRSRVRKLQYISELERSVTSLQTEVSVLSPRVAFLDHQ) folds into the bZIP domain. A basic motif region spans residues 204–223 (KRVKRILANRQSAQRSRVRK). A leucine-zipper region spans residues 230–251 (LERSVTSLQTEVSVLSPRVAFL). Residues 304 to 313 (KMENNVSDQS) show a composition bias toward polar residues. Residues 304-329 (KMENNVSDQSPADIKPSVEKEQLLNV) are disordered. Residues 319 to 329 (PSVEKEQLLNV) are compositionally biased toward basic and acidic residues.

As to quaternary structure, forms heterodimers with BZIP18, BZIP43 and VIP1/BZIP51.

The protein resides in the nucleus. In terms of biological role, transcriptional activator. The chain is Basic leucine zipper 61 from Arabidopsis thaliana (Mouse-ear cress).